The sequence spans 899 residues: Solute carrier family 12 member 9 (899 aa).

Residues 1 to 44 (MTSESSPLLHYRLFSVSDGGLGPPDSSPIMTDAVTVGTGPTQRK) lie on the Cytoplasmic side of the membrane. Residues 45-65 (LSTFFGVVVPTVLSMFSIVVF) traverse the membrane as a helical segment. Over 66 to 80 (MRIGFVVGHAGLLQS) the chain is Extracellular. A helical membrane pass occupies residues 81-101 (LLMLFVAYVIIWLTVLSVCAI). At 102–127 (STNGAVQGGGAYFMISRTLGPEFGGS) the chain is on the cytoplasmic side. A helical transmembrane segment spans residues 128–148 (IGLMFYLANVFACGVYVLGLV). At 149–176 (EAVLDVFGRDPSDVTDSLRSLPQGYGYS) the chain is on the extracellular side. The chain crosses the membrane as a helical span at residues 177-197 (FLYASIILLLCMAICLVGASI). Over 198-202 (YSQAS) the chain is Cytoplasmic. The helical transmembrane segment at 203-223 (FFIFLLVFVVLLTILISFLAV) threads the bilayer. Topologically, residues 224–266 (RPLTVSIRHGGNVTMTGVYTGINSSTLHNNLQADYSLDYTTGN) are extracellular. N-linked (GlcNAc...) asparagine glycosylation is found at N235 and N246. Residues 267-287 (LMNFATVFAVMFNGCTGIMAG) form a helical membrane-spanning segment. Residues 288 to 304 (CNLSGELKQPSRSIPMG) are Cytoplasmic-facing. A helical membrane pass occupies residues 305 to 325 (TIIAVIITFFVYLILFIFTAF). The Extracellular segment spans residues 326-347 (TCDRTLLREDYGFFRSINIWPP). Residues 348–368 (FVLIGVYATSLSASMSTLIGA) traverse the membrane as a helical segment. Topologically, residues 369–393 (SRILHALAKDDLFGVLLAPAKLVSK) are cytoplasmic. Residues 394 to 414 (GGNPWGAVVYTWALVQLVLLA) form a helical membrane-spanning segment. Residues 415–419 (GKLNT) are Extracellular-facing. A helical membrane pass occupies residues 420–440 (IAGIVTVFYLIAYAAIDLACL). Topologically, residues 441 to 469 (ALEWASAPNFRPTFRFFSWHTCLLGILSS) are cytoplasmic. A helical membrane pass occupies residues 470–490 (LVMMFLINPAYASGSIVLLLL). The Extracellular portion of the chain corresponds to 491–739 (LLGSIHFRSS…PLDLLRPQAS (249 aa)). The chain crosses the membrane as a helical span at residues 740 to 760 (AYVDVCSLFLLQMACILNMAA). Residues 761–899 (SWRRYQLRVF…GLTPVTCTEL (139 aa)) lie on the Cytoplasmic side of the membrane.

Belongs to the SLC12A transporter family.

The protein resides in the cell membrane. It localises to the lysosome membrane. In terms of biological role, seems to correspond to a subunit of a multimeric transport system and thus, additional subunits may be required for its function. May play a role in lysosomal ion flux and osmoregulation. The sequence is that of Solute carrier family 12 member 9 (slc12a9) from Xenopus laevis (African clawed frog).